A 312-amino-acid chain; its full sequence is Aspartate carbamoyltransferase catalytic subunit (312 aa).

Carbamoyl phosphate contacts are provided by Arg-55 and Thr-56. L-aspartate is bound at residue Lys-83. Carbamoyl phosphate contacts are provided by Arg-105, His-133, and Gln-136. 2 residues coordinate L-aspartate: Arg-166 and Arg-220. Positions 261 and 262 each coordinate carbamoyl phosphate.

It belongs to the aspartate/ornithine carbamoyltransferase superfamily. ATCase family. As to quaternary structure, heterododecamer (2C3:3R2) of six catalytic PyrB chains organized as two trimers (C3), and six regulatory PyrI chains organized as three dimers (R2).

It carries out the reaction carbamoyl phosphate + L-aspartate = N-carbamoyl-L-aspartate + phosphate + H(+). It participates in pyrimidine metabolism; UMP biosynthesis via de novo pathway; (S)-dihydroorotate from bicarbonate: step 2/3. Functionally, catalyzes the condensation of carbamoyl phosphate and aspartate to form carbamoyl aspartate and inorganic phosphate, the committed step in the de novo pyrimidine nucleotide biosynthesis pathway. The chain is Aspartate carbamoyltransferase catalytic subunit from Prosthecochloris aestuarii (strain DSM 271 / SK 413).